The primary structure comprises 256 residues: Putative transcription factor 001R (256 aa).

Functionally, transcription activation. This Frog virus 3 (isolate Goorha) (FV-3) protein is Putative transcription factor 001R.